Here is a 325-residue protein sequence, read N- to C-terminus: MVAELEFEKPLIELRKKISELKEFMKSTDVDLSSEIEKLEARLAKLENDIYANLTPWDRVQIARHPNRPTTLDYIERLFTHFLECHGDRCFGDDEAIVGGIAKYDGLPVTVIGHQRGKDTKENIRRNFGMPHPEGYRKALRLMKQAEKFQRPIICFIDTKGAYPGKAAEERGQSEAIARNLFEMAGLTVPIVCIVIGEGGSGGALALGVGNHIHMLENSTYSVISPEGAAAILWKDASLAQRAAETMKITANDLKELGVIDEIIPEVRGGAHRDVDQQAAEIDKVLKRSLKQLLKLDGETLVQQRYEKFKQIGQFAFSRDDIWVR.

The CoA carboxyltransferase C-terminal domain maps to 35–292; the sequence is EIEKLEARLA…DKVLKRSLKQ (258 aa).

It belongs to the AccA family. Acetyl-CoA carboxylase is a heterohexamer composed of biotin carboxyl carrier protein (AccB), biotin carboxylase (AccC) and two subunits each of ACCase subunit alpha (AccA) and ACCase subunit beta (AccD).

The protein resides in the cytoplasm. It catalyses the reaction N(6)-carboxybiotinyl-L-lysyl-[protein] + acetyl-CoA = N(6)-biotinyl-L-lysyl-[protein] + malonyl-CoA. It participates in lipid metabolism; malonyl-CoA biosynthesis; malonyl-CoA from acetyl-CoA: step 1/1. Its function is as follows. Component of the acetyl coenzyme A carboxylase (ACC) complex. First, biotin carboxylase catalyzes the carboxylation of biotin on its carrier protein (BCCP) and then the CO(2) group is transferred by the carboxyltransferase to acetyl-CoA to form malonyl-CoA. In Geobacillus sp. (strain WCH70), this protein is Acetyl-coenzyme A carboxylase carboxyl transferase subunit alpha.